The primary structure comprises 944 residues: Protocadherin gamma-C5 (944 aa).

An N-terminal signal peptide occupies residues 1–29 (MGPKTLPQLAGKWQVLCMLSLCCWGWVSG). Cadherin domains lie at 30-133 (QLRY…SPSF), 134-242 (ATPE…APTF), 243-350 (QSSV…APEV), 351-454 (LLAS…APRF), 455-564 (NQQL…APAV), and 571-677 (WEHS…MPKS). The Extracellular segment spans residues 30 to 693 (QLRYSVVEES…PPERSDLTLY (664 aa)). N-linked (GlcNAc...) asparagine glycans are attached at residues Asn-265, Asn-443, and Asn-547. A helical membrane pass occupies residues 694–714 (LIVALATVSLLSLVTFTFLSA). The Cytoplasmic segment spans residues 715 to 944 (KCLQGNADGD…KKKSGKKEKK (230 aa)). 3 disordered regions span residues 722-747 (DGDG…QSSP), 812-853 (SNTL…WPNN), and 914-944 (ATLT…KEKK). A compositionally biased stretch (polar residues) spans 820–853 (QQAPPNTDWRFSQAQRPGTSGSQNGDDTGTWPNN). Residues 934–944 (NKKKSGKKEKK) show a composition bias toward basic residues.

The protein localises to the cell membrane. Its function is as follows. Potential calcium-dependent cell-adhesion protein. May be involved in the establishment and maintenance of specific neuronal connections in the brain. In Pan troglodytes (Chimpanzee), this protein is Protocadherin gamma-C5 (PCDHGC5).